The chain runs to 544 residues: MELPFSAMSLLYLLVGIAGVISHQCYFRRGEHHLYPFAYLRWYTLIITAPTVVVSIVWGLPLYDAAKATGGWALTYFAGLYTSLLLYRVQFHPLHGFPGPYGARISGLWLSMGLRDRPAFQKLQELHNQYGPIVRVGPSELSIAYPEAVGIVYGHQSRCYKSTFYDNGHPMKSLHSYRDRAAHDQRRRTWSTGFGDRALRGYETRVHEYRQKLFTRLNDAVGLTVNISDWFNFYSYDVMGDLAFGRSFNMLDTHSNHWAIQVLLDGIVLYKYFVPSWLFRCFVTLPSLSKNWHRFVEFTTQKLVHRMNDKLEIPDICASLLAPLNGRSPTPDEFNLLMGDAMLVVTAGSDTTATALTSVVYELARHPEDVERLRAELLPIDADANGEYRHEQISNLPHLNGFINETLRLHPPVPSVIPRITPAEGVHVKGTHIPGGMAVFCPQWVIGRSDAAFIAPLSFNPERWYKHPDLIKHRSAYAPFLTGPYSCIGKPLALMNIRTTIARLIMTFEIRFPAGEDGSHLMENVEDHFSMGIERMPVVLTRRG.

The signal sequence occupies residues 1–22 (MELPFSAMSLLYLLVGIAGVIS). Transmembrane regions (helical) follow at residues 42-62 (WYTL…GLPL) and 66-86 (AKAT…SLLL). N-linked (GlcNAc...) asparagine glycosylation is found at N226 and N404. C487 is a binding site for heme.

Belongs to the cytochrome P450 family. Heme serves as cofactor.

Its subcellular location is the membrane. Its pathway is alkaloid biosynthesis. In terms of biological role, cytochrome P450 monooxygenase; part of the gene cluster that mediates the biosynthesis of notoamide, a fungal indole alkaloid that belongs to a family of natural products containing a characteristic bicyclo[2.2.2]diazaoctane core. The first step of notoamide biosynthesis involves coupling of L-proline and L-tryptophan by the bimodular NRPS notE', to produce cyclo-L-tryptophan-L-proline called brevianamide F. The reverse prenyltransferase notF' then acts as a deoxybrevianamide E synthase and converts brevianamide F to deoxybrevianamide E via reverse prenylation at C-2 of the indole ring leading to the bicyclo[2.2.2]diazaoctane core. Deoxybrevianamide E is further hydroxylated at C-6 of the indole ring, likely catalyzed by the cytochrome P450 monooxygenase notG', to yield 6-hydroxy-deoxybrevianamide E. 6-hydroxy-deoxybrevianamide E is a specific substrate of the prenyltransferase notC' for normal prenylation at C-7 to produce 6-hydroxy-7-prenyl-deoxybrevianamide, also called notoamide S. As the proposed pivotal branching point in notoamide biosynthesis, notoamide S can be diverted to notoamide E through an oxidative pyran ring closure putatively catalyzed by either notH' cytochrome P450 monooxygenase or the notD' FAD-linked oxidoreductase. This step would be followed by an indole 2,3-epoxidation-initiated pinacol-like rearrangement catalyzed by the notB' FAD-dependent monooxygenase leading to the formation of notoamide C and notoamide D. On the other hand notoamide S is converted to notoamide T by notH' (or notD'), a bifunctional oxidase that also functions as the intramolecular Diels-Alderase responsible for generation of (-)-notoamide T. To generate antipodal (+)-notoaminide T, notH (or notD) in Aspergillus strain MF297-2 is expected to catalyze a Diels-Alder reaction leading to the opposite stereochemistry. The remaining oxidoreductase notD' (or notH') likely catalyzes the oxidative pyran ring formation to yield (-)-stephacidin A. The FAD-dependent monooxygenase notI' is highly similar to notB' and is predicted to catalyze a similar conversion from (-)-stephacidin A to (+)-notoamide B via the 2,3-epoxidation of (-)-stephacidin A followed by a pinacol-type rearrangement. Finally, it remains unclear which enzyme could be responsible for the final hydroxylation steps leading to notoamide A and sclerotiamide. The chain is Cytochrome P450 monooxygenase notG' from Aspergillus versicolor.